The following is a 251-amino-acid chain: Mast cell protease 3 (251 aa).

An N-terminal signal peptide occupies residues 1 to 17 (MVLFLLLVALLSPAGEA). The propeptide at 18 to 19 (GK) is activation peptide. The Peptidase S1 domain maps to 20 to 243 (IIGGHEAKPH…FLSWIQRTMR (224 aa)). Cys48 and Cys64 are oxidised to a cystine. The Charge relay system role is filled by His63. Residue Asn70 is glycosylated (N-linked (GlcNAc...) asparagine). Asp107 serves as the catalytic Charge relay system. 2 cysteine pairs are disulfide-bonded: Cys141-Cys207 and Cys172-Cys186. Ser201 serves as the catalytic Charge relay system.

It belongs to the peptidase S1 family. Granzyme subfamily.

It is found in the secreted. It localises to the cytoplasmic granule. The protein is Mast cell protease 3 of Ovis aries (Sheep).